Consider the following 249-residue polypeptide: Olfactory receptor 1571 (249 aa).

The chain crosses the membrane as a helical span at residues 1 to 9 (LLMCNLCFA). At 10 to 40 (DICFTSASIPTNLVNIQTKNKVITYEGCISQ) the chain is on the extracellular side. Cysteines 37 and 119 form a disulfide. A helical membrane pass occupies residues 41 to 60 (VYFFILFGVLDNFLLAVMAY). Residues 61 to 82 (DRYVAICHPLHYTVIMNRRLCG) are Cytoplasmic-facing. The helical transmembrane segment at 83–103 (LLVLGSWVTTALNSLLQSSMA) threads the bilayer. At 104–136 (LRLSFCTDLKIPHFVCELNQLVLLACNDTFPND) the chain is on the extracellular side. N-linked (GlcNAc...) asparagine glycosylation is present at asparagine 130. The chain crosses the membrane as a helical span at residues 137 to 158 (MVMYFAAVLLGGGPLAGILYSY). Residues 159–180 (SKIVSSIRAISSSQGKYKAFST) are Cytoplasmic-facing. Residues 181 to 200 (CASHLSVVSLFYSTLLGVYL) form a helical membrane-spanning segment. The Extracellular portion of the chain corresponds to 201-210 (SSSFTQNSHS). Residues 211–232 (TARASVMYSVVTPMLNPFIYSL) form a helical membrane-spanning segment. Residues 233 to 249 (RNKDLMGALRRLFRRKP) are Cytoplasmic-facing.

Belongs to the G-protein coupled receptor 1 family. In terms of tissue distribution, tongue specific.

The protein resides in the cell membrane. Functionally, possible taste receptor. The sequence is that of Olfactory receptor 1571 (Olr1571) from Rattus norvegicus (Rat).